We begin with the raw amino-acid sequence, 258 residues long: UPF0246 protein Asuc_0575 (258 aa).

The protein belongs to the UPF0246 family.

This is UPF0246 protein Asuc_0575 from Actinobacillus succinogenes (strain ATCC 55618 / DSM 22257 / CCUG 43843 / 130Z).